Here is a 225-residue protein sequence, read N- to C-terminus: Uracil-DNA glycosylase (225 aa).

Asp-65 serves as the catalytic Proton acceptor.

It belongs to the uracil-DNA glycosylase (UDG) superfamily. UNG family.

The protein resides in the cytoplasm. The catalysed reaction is Hydrolyzes single-stranded DNA or mismatched double-stranded DNA and polynucleotides, releasing free uracil.. Its function is as follows. Excises uracil residues from the DNA which can arise as a result of misincorporation of dUMP residues by DNA polymerase or due to deamination of cytosine. This Anoxybacillus flavithermus (strain DSM 21510 / WK1) protein is Uracil-DNA glycosylase.